A 103-amino-acid chain; its full sequence is Large ribosomal subunit protein uL24 (103 aa).

Belongs to the universal ribosomal protein uL24 family. Part of the 50S ribosomal subunit.

Functionally, one of two assembly initiator proteins, it binds directly to the 5'-end of the 23S rRNA, where it nucleates assembly of the 50S subunit. Its function is as follows. One of the proteins that surrounds the polypeptide exit tunnel on the outside of the subunit. The polypeptide is Large ribosomal subunit protein uL24 (Dehalococcoides mccartyi (strain ATCC BAA-2100 / JCM 16839 / KCTC 5957 / BAV1)).